Consider the following 471-residue polypeptide: Ubiquitin carboxyl-terminal hydrolase calypso (471 aa).

Positions 45-276 (GWLELESDPG…IRFNLMAVVP (232 aa)) constitute a UCH catalytic domain. Residue C131 is the Nucleophile of the active site. Residue H213 is the Proton donor of the active site. 2 coiled-coil regions span residues 240 to 256 (WEDS…VMAE) and 298 to 324 (GTLQ…DTPT). The disordered stretch occupies residues 307-326 (DEQGESGNGDSQRPDTPTTL). A compositionally biased stretch (polar residues) spans 314 to 326 (NGDSQRPDTPTTL). A ULD domain is found at 375–403 (NYDKFICTFLSMLAHQGVLGELVSQHLLP). The segment at 405–471 (KKVSGQGAAN…KGRNKCRKRK (67 aa)) is positively charged C-terminal tail required for binding nucleosomes. Residues 412–471 (AANRISKQSTTASAGGSTAAGTASTPKTQQQQAAAAKNGKSPSKTPGRRRKGRNKCRKRK) form a disordered region. Positions 420-447 (STTASAGGSTAAGTASTPKTQQQQAAAA) are enriched in low complexity. A compositionally biased stretch (basic residues) spans 457–471 (PGRRRKGRNKCRKRK).

This sequence belongs to the peptidase C12 family. BAP1 subfamily. In terms of assembly, catalytic component of the polycomb repressive deubiquitinase (PR-DUB) complex, at least composed of caly/calypso, Asx and sba (MBD5/6 homolog). The PR-DUB complex associates with nucleosomes to mediate deubiquitination of histone H2AK118ub1 substrates; the association requires the positively charged C-terminal tail of caly, probably due to direct binding of DNA. Interacts (via ULD domain) with Asx (via DEUBAD domain); the interaction produces a stable heterodimer with a composite binding site for ubiquitin. Homodimerizes (via coiled-coil hinge-region between the UCH and ULD domains) to mediate assembly of 2 copies of the caly-Asx heterodimer into a bisymmetric tetramer; dimerization enhances PR-DUB association with nucleosomes.

It is found in the nucleus. The enzyme catalyses Thiol-dependent hydrolysis of ester, thioester, amide, peptide and isopeptide bonds formed by the C-terminal Gly of ubiquitin (a 76-residue protein attached to proteins as an intracellular targeting signal).. Its function is as follows. Catalytic component of the polycomb repressive deubiquitinase (PR-DUB) complex, a complex that specifically mediates deubiquitination of histone H2A monoubiquitinated at 'Lys-119' (H2AK118ub1). Mediates bisymmetric organization of the PR-DUB complex and is involved in association with nucleosomes to mediate deubiquitination. Does not deubiquitinate monoubiquitinated histone H2B. Required to maintain the transcriptionally repressive state of homeotic genes throughout development. The PR-DUB complex has weak or no activity toward 'Lys-48'- and 'Lys-63'-linked polyubiquitin chains. Polycomb group (PcG) protein. The polypeptide is Ubiquitin carboxyl-terminal hydrolase calypso (Drosophila melanogaster (Fruit fly)).